The sequence spans 487 residues: Cytochrome P450 720B2 (487 aa).

The helical transmembrane segment at Trp14 to Val34 threads the bilayer. Cys436 contacts heme.

Belongs to the cytochrome P450 family. It depends on heme as a cofactor.

It localises to the membrane. This Pinus taeda (Loblolly pine) protein is Cytochrome P450 720B2 (CYP720B2).